The sequence spans 382 residues: Mannitol-1-phosphate 5-dehydrogenase (382 aa).

Residue 3-14 (ALHFGAGNIGRG) coordinates NAD(+). N6-acetyllysine is present on lysine 269.

The protein belongs to the mannitol dehydrogenase family. As to quaternary structure, monomer.

It carries out the reaction D-mannitol 1-phosphate + NAD(+) = beta-D-fructose 6-phosphate + NADH + H(+). The protein is Mannitol-1-phosphate 5-dehydrogenase of Escherichia coli O157:H7.